We begin with the raw amino-acid sequence, 141 residues long: Aspartate 1-decarboxylase (141 aa).

Ser-25 serves as the catalytic Schiff-base intermediate with substrate; via pyruvic acid. The residue at position 25 (Ser-25) is a Pyruvic acid (Ser). Thr-57 provides a ligand contact to substrate. The active-site Proton donor is Tyr-58. 73-75 (GAA) contributes to the substrate binding site.

It belongs to the PanD family. In terms of assembly, heterooctamer of four alpha and four beta subunits. It depends on pyruvate as a cofactor. In terms of processing, is synthesized initially as an inactive proenzyme, which is activated by self-cleavage at a specific serine bond to produce a beta-subunit with a hydroxyl group at its C-terminus and an alpha-subunit with a pyruvoyl group at its N-terminus.

The protein localises to the cytoplasm. It catalyses the reaction L-aspartate + H(+) = beta-alanine + CO2. It participates in cofactor biosynthesis; (R)-pantothenate biosynthesis; beta-alanine from L-aspartate: step 1/1. Its function is as follows. Catalyzes the pyruvoyl-dependent decarboxylation of aspartate to produce beta-alanine. This chain is Aspartate 1-decarboxylase, found in Salinispora arenicola (strain CNS-205).